The sequence spans 211 residues: Thymidylate kinase (211 aa).

Position 11–18 (11–18) interacts with ATP; it reads GPDGAGKT.

Belongs to the thymidylate kinase family.

The enzyme catalyses dTMP + ATP = dTDP + ADP. In terms of biological role, phosphorylation of dTMP to form dTDP in both de novo and salvage pathways of dTTP synthesis. This chain is Thymidylate kinase, found in Streptococcus equi subsp. zooepidemicus (strain H70).